The chain runs to 528 residues: MTVDALTQPHHLLSLAWNDTQQHGSWFAPLVTTSAGLLCLLLYLCSSGRRSDLPVFNPKTWWELTTMRAKRDFDANAPSWIESWFSQNDKPIRFIVDSGYCTILPSSMADEFRKMKELCMYKFLGTDFHSHLPGFDGFKEVTRDAHLITKVVMNQFQTQAPKYVKPLANEASGIITDIFGDSNEWHTVPVYNQCLDLVTRTVTFIMVGSKLAHNEEWLDIAKHHAVTMAIQARQLRLWPVILRPLVHWLEPQGAKLRAQVRRARQLLDPIIQERRAERDACRAKGIEPPRYVDSIQWFEDTAKGKWYDAAGAQLAMDFAGIYGTSDLLIGGLVDIVRHPHLLEPLRDEIRTVIGQGGWTPASLYKLKLLDSCLKESQRVKPVECATMRSYALQDVTFSNGTFIPKGELVAVAADRMSNPEVWPEPAKYDPYRYMRLREDPAKAFSAQLENTNGDHIGFGWHPRACPGRFFASKEIKMMLAYLLIRYDWKVVPDEPLQYYRHSFSVRIHPTTKLMMRRRDEDIRLPGSL.

Topologically, residues methionine 1–histidine 23 are cytoplasmic. A helical; Signal-anchor for type II membrane protein membrane pass occupies residues glycine 24–leucine 44. At cysteine 45–leucine 528 the chain is on the lumenal side. Heme is bound at residue cysteine 465.

The protein belongs to the cytochrome P450 family. Heme serves as cofactor.

The protein localises to the membrane. It is found in the endoplasmic reticulum membrane. It catalyses the reaction dihydromonacolin L carboxylate + reduced [NADPH--hemoprotein reductase] + O2 = monacolin L carboxylate + oxidized [NADPH--hemoprotein reductase] + 2 H2O + H(+). The enzyme catalyses monacolin L carboxylate + reduced [NADPH--hemoprotein reductase] + O2 = monacolin J carboxylate + oxidized [NADPH--hemoprotein reductase] + H2O + H(+). It participates in polyketide biosynthesis; lovastatin biosynthesis. Dihydromonacolin L monooxygenase; part of the gene cluster that mediates the biosynthesis of lovastatin (also known as mevinolin, mevacor or monacolin K), a hypolipidemic inhibitor of (3S)-hydroxymethylglutaryl-coenzyme A (HMG-CoA) reductase (HMGR). The first step in the biosynthesis of lovastatin is the production of dihydromonacolin L acid by the lovastatin nonaketide synthase lovB and the trans-acting enoyl reductase lovC via condensation of one acetyl-CoA unit and 8 malonyl-CoA units. Dihydromonacolin L acid is released from lovB by the thioesterase lovG. Next, dihydromonacolin L acid is oxidized by the dihydromonacolin L monooxygenase lovA twice to form monacolin J acid. The 2-methylbutyrate moiety of lovastatin is synthesized by the lovastatin diketide synthase lovF via condensation of one acetyl-CoA unit and one malonyl-CoA unit. Finally, the covalent attachment of this moiety to monacolin J acid is catalyzed by the transesterase lovD to yield lovastatin. LovD has broad substrate specificity and can also convert monacolin J to simvastatin using alpha-dimethylbutanoyl-S-methyl-3-mercaptopropionate (DMB-S-MMP) as the thioester acyl donor, and can also catalyze the reverse reaction and function as hydrolase in vitro. LovD has much higher activity with LovF-bound 2-methylbutanoate than with free diketide substrates. The sequence is that of Dihydromonacolin L monooxygenase LovA from Aspergillus terreus.